The following is a 361-amino-acid chain: DNA polymerase subunit gamma-2, mitochondrial (361 aa).

The N-terminal 18 residues, 1–18 (MSRIQRCFKSLASAGFFR), are a transit peptide targeting the mitochondrion.

As to quaternary structure, component of the DNA polymerase gamma complex consisting of two subunits: the catalytic subunit DNApol-gamma/DNApolG1 and the accessory subunit PolG2/DNApol-gamma35. As to expression, expressed in ovaries (at protein level).

It localises to the mitochondrion. As accessory component of the DNA polymerase gamma complex is involved in the replication of mitochondrial DNA. Does not bind DNA. Essential for mitochondrial DNA maintenance and larval development. This chain is DNA polymerase subunit gamma-2, mitochondrial, found in Drosophila melanogaster (Fruit fly).